Here is a 926-residue protein sequence, read N- to C-terminus: Beta-mannosidase A (926 aa).

The first 21 residues, 1-21 (MHVKAETVLALLTPAPPSVVG), serve as a signal peptide directing secretion. 5 N-linked (GlcNAc...) asparagine glycosylation sites follow: N40, N242, N277, N311, and N342. E474 (proton donor) is an active-site residue. N532, N603, N626, N653, N733, N756, N785, N793, N819, and N905 each carry an N-linked (GlcNAc...) asparagine glycan.

The protein belongs to the glycosyl hydrolase 2 family. Beta-mannosidase A subfamily. In terms of assembly, homodimer.

Its subcellular location is the secreted. The enzyme catalyses Hydrolysis of terminal, non-reducing beta-D-mannose residues in beta-D-mannosides.. It participates in glycan metabolism; N-glycan degradation. Its function is as follows. Exoglycosidase that cleaves the single beta-linked mannose residue from the non-reducing end of beta-mannosidic oligosaccharides of various complexity and length. Involved in the degradation of polymeric mannan and galactomannan. The chain is Beta-mannosidase A (mndA) from Aspergillus fumigatus (strain CBS 144.89 / FGSC A1163 / CEA10) (Neosartorya fumigata).